The sequence spans 344 residues: Olfactory receptor class A-like protein 4 (344 aa).

Residues 1-10 (MSEVLTVDAV) are Extracellular-facing. A helical membrane pass occupies residues 11–31 (LFGLLVFSGIIGNIMVIYVVF). The Cytoplasmic segment spans residues 32-47 (DCAKLCASRHLPPSDT). Residues 48–68 (ILVHLCLANLLTSVFRTVPIF) traverse the membrane as a helical segment. The Extracellular segment spans residues 69–84 (VSDLGLQVWLTAGWCR). A disulfide bridge connects residues cysteine 83 and cysteine 169. The chain crosses the membrane as a helical span at residues 85-105 (VFMLLWVWWRAVGCWVTLALS). At 106-130 (AFHCATLRRQHVSMGPLGHSRERRR) the chain is on the cytoplasmic side. The helical transmembrane segment at 131–151 (VWVVLAVVWAANLLFSLPALV) threads the bilayer. At 152–186 (YTTQVRGNATVELMVISCTTRPLLGCVWEFPTFQQ) the chain is on the extracellular side. Asparagine 159 carries an N-linked (GlcNAc...) asparagine glycan. The helical transmembrane segment at 187 to 207 (GYAFASSSLALNEVLPLVLMV) threads the bilayer. The Cytoplasmic portion of the chain corresponds to 208-246 (GTNLATLQALGKHIRTVRAGGSTGAELDRHVSSERKAGH). The helical transmembrane segment at 247-267 (VIMALVALFVGCWVLQVAAVT) threads the bilayer. The Extracellular segment spans residues 268-279 (YYNHNRGAHAEG). A helical transmembrane segment spans residues 280–300 (LLTVAHFSASLFVGFSPLVVA). The Cytoplasmic portion of the chain corresponds to 301–344 (LGHGKLRRRISGILQSCMHRLKQTQDKPAEITEKDGRTTQSAMK). Residues 324–337 (TQDKPAEITEKDGR) are compositionally biased toward basic and acidic residues. Residues 324-344 (TQDKPAEITEKDGRTTQSAMK) are disordered.

The protein belongs to the G-protein coupled receptor 1 family. Highly expressed in the olfactory rosette. Specifically localizes to crypt neurons in the olfactory neuroepithelium. Colocalizes with the inhibitory G-protein gnaia in crypt neurons. Not detected in other tissues tested.

The protein resides in the cell membrane. Its function is as follows. Probable olfactory receptor. The chain is Olfactory receptor class A-like protein 4 (ora4) from Danio rerio (Zebrafish).